The following is a 696-amino-acid chain: C2 domain-containing protein 2 (696 aa).

Residues 13-33 form a helical membrane-spanning segment; the sequence is AQWLALVSLFVAALATVGLYL. The SMP-LBD domain maps to 51-242; it reads EPGEGPRPGS…PTTVKEAQNL (192 aa). Position 60 is a phosphoserine (Ser-60). The C2 domain maps to 245–362; it reads AASTAQESCP…KKQPSGPQSF (118 aa). Phosphoserine occurs at positions 435 and 441. Phosphothreonine is present on Thr-445. The disordered stretch occupies residues 539–580; it reads VDSTHQEDAPSHPERAAASAPPEEAESAQASLAPKPQEDELD. The span at 542 to 553 shows a compositional bias: basic and acidic residues; that stretch reads THQEDAPSHPER. Over residues 554–572 the composition is skewed to low complexity; the sequence is AAASAPPEEAESAQASLAP. Position 581 is a phosphoserine (Ser-581).

The protein resides in the membrane. This is C2 domain-containing protein 2 (C2CD2) from Homo sapiens (Human).